The primary structure comprises 116 residues: APDAAPASLYAPSALVLTIGHGGAAATATPERAVTLTCAPTSSGTHPAASAACAELRGVGGDFAALKARDDVWCNKLYDPVVVTAQGVWQGQRVSYERTFGNSCERDAVGGSLFAF.

2 cysteine pairs are disulfide-bonded: cysteine 38–cysteine 53 and cysteine 74–cysteine 104.

It belongs to the protease inhibitor I16 (SSI) family. Homodimer.

The protein localises to the secreted. In terms of biological role, inhibitor of subtilisin BPN' and trypsin. This is Subtilisin inhibitor-like protein 4 from Streptomyces lavendulae.